Consider the following 122-residue polypeptide: Large ribosomal subunit protein uL14 (122 aa).

This sequence belongs to the universal ribosomal protein uL14 family. In terms of assembly, part of the 50S ribosomal subunit. Forms a cluster with proteins L3 and L19. In the 70S ribosome, L14 and L19 interact and together make contacts with the 16S rRNA in bridges B5 and B8.

Functionally, binds to 23S rRNA. Forms part of two intersubunit bridges in the 70S ribosome. This is Large ribosomal subunit protein uL14 from Enterococcus faecalis (strain ATCC 700802 / V583).